The chain runs to 63 residues: Large ribosomal subunit protein uL29 (63 aa).

This sequence belongs to the universal ribosomal protein uL29 family.

This chain is Large ribosomal subunit protein uL29, found in Actinobacillus pleuropneumoniae serotype 5b (strain L20).